A 382-amino-acid polypeptide reads, in one-letter code: Mannitol-1-phosphate 5-dehydrogenase (382 aa).

3 to 14 is a binding site for NAD(+); that stretch reads ALHFGAGNIGRG. At Lys269 the chain carries N6-acetyllysine.

The protein belongs to the mannitol dehydrogenase family.

It carries out the reaction D-mannitol 1-phosphate + NAD(+) = beta-D-fructose 6-phosphate + NADH + H(+). The protein is Mannitol-1-phosphate 5-dehydrogenase of Escherichia coli O127:H6 (strain E2348/69 / EPEC).